A 338-amino-acid chain; its full sequence is Protein UL141 (338 aa).

Positions 1–25 (MCRRESLRTLPWLFWVLLSCPRLLE) are cleaved as a signal peptide. Residues 37–278 (DIAEKMWAEN…DTGMSPWATR (242 aa)) lie on the Extracellular side of the membrane. 3 N-linked (GlcNAc...) asparagine; by host glycosylation sites follow: Asn117, Asn132, and Asn147. A helical transmembrane segment spans residues 279–299 (GIAAFLGFWSIFTVCFLCYLC). The Cytoplasmic segment spans residues 300-338 (YLQCCGHWCPTPGRGRRGGEGYRRLPTYDSYPGVKKMKR).

In terms of assembly, interacts with human PVR. Interacts with human TNFRSF10A and TNFRSF10B. Forms a homodimer that engages two TNFRSF10B monomers.

It is found in the host endoplasmic reticulum membrane. Functionally, evasion of NK cell killing. Blocks surface expression of PVR which is a ligand for NK cell-activating receptors. Binds human PVR in the endoplasmic reticulum and prevents its maturation and transport to the cell surface. Targets also the natural killer cell activating ligand NECTIN2 for proteasome-mediated degradation. Additionally promotes intracellular retention of TNFRSF10A/TRAIL-R1 and TNFRSF10B/TRAIL-R2 and thus down-regulates their cell surface expression. The sequence is that of Protein UL141 (UL141) from Human cytomegalovirus (strain Merlin) (HHV-5).